The sequence spans 109 residues: Cell division protein ZapA (109 aa).

Residues 21-99 adopt a coiled-coil conformation; it reads PEQRDALNQA…IEQALLEQGR (79 aa).

This sequence belongs to the ZapA family. Type 1 subfamily. Homodimer. Interacts with FtsZ.

The protein localises to the cytoplasm. Functionally, activator of cell division through the inhibition of FtsZ GTPase activity, therefore promoting FtsZ assembly into bundles of protofilaments necessary for the formation of the division Z ring. It is recruited early at mid-cell but it is not essential for cell division. The polypeptide is Cell division protein ZapA (Cronobacter sakazakii (strain ATCC BAA-894) (Enterobacter sakazakii)).